The primary structure comprises 350 residues: uncharacterized protein (350 aa).

Disordered regions lie at residues 1–21 (MDSFHPTPGKPTTATSNSSLN), 237–266 (NSDVIESSAEDSSNTDNPSTKPSNEMPISP), and 278–298 (EMSTPNSNHSRSRTPSSKKRT). Composition is skewed to polar residues over residues 10–21 (KPTTATSNSSLN) and 246–259 (EDSSNTDNPSTKPS). The span at 287 to 298 (SRSRTPSSKKRT) shows a compositional bias: basic residues.

It localises to the nucleus. This is an uncharacterized protein from Schizosaccharomyces pombe (strain 972 / ATCC 24843) (Fission yeast).